A 259-amino-acid chain; its full sequence is Triosephosphate isomerase (259 aa).

10–12 (NWK) contacts substrate. The Electrophile role is filled by H100. E172 acts as the Proton acceptor in catalysis. Substrate is bound by residues G178, S218, and 239–240 (GG).

Belongs to the triosephosphate isomerase family. Homodimer.

It localises to the cytoplasm. It carries out the reaction D-glyceraldehyde 3-phosphate = dihydroxyacetone phosphate. It participates in carbohydrate biosynthesis; gluconeogenesis. The protein operates within carbohydrate degradation; glycolysis; D-glyceraldehyde 3-phosphate from glycerone phosphate: step 1/1. Involved in the gluconeogenesis. Catalyzes stereospecifically the conversion of dihydroxyacetone phosphate (DHAP) to D-glyceraldehyde-3-phosphate (G3P). This chain is Triosephosphate isomerase, found in Corynebacterium glutamicum (strain ATCC 13032 / DSM 20300 / JCM 1318 / BCRC 11384 / CCUG 27702 / LMG 3730 / NBRC 12168 / NCIMB 10025 / NRRL B-2784 / 534).